We begin with the raw amino-acid sequence, 168 residues long: MAENRRNDREQSEFEERVVSINRVTKVVKGGRRLRFAALVVVGDRNGRVGFGTGKAQEVPEAIRKAIEAAKKNLITVPMVGTTLPHEALGVFGGGKILLKPAVEGAGVAAGGAVRAVLELAGVADVTSKSLGSNTPINVVRATVDGLNQLKRAEEVAALRGKSVSDFA.

Residues 14–77 (FEERVVSINR…EAAKKNLITV (64 aa)) enclose the S5 DRBM domain.

It belongs to the universal ribosomal protein uS5 family. In terms of assembly, part of the 30S ribosomal subunit. Contacts proteins S4 and S8.

In terms of biological role, with S4 and S12 plays an important role in translational accuracy. Located at the back of the 30S subunit body where it stabilizes the conformation of the head with respect to the body. The polypeptide is Small ribosomal subunit protein uS5 (Lactococcus lactis subsp. lactis (strain IL1403) (Streptococcus lactis)).